Reading from the N-terminus, the 370-residue chain is MRVIFSGGGTGGHIYPIMALIERLKEEGICQDDEILFVGTKKGLESKIVPAAGVNFKTIDIQGFDRKHLLNNVKTIQLFLKATKRAKEILADFQPDVVLGTGGYVSGAIVYEASKMKIPTMIHESNSVVGVANKFLGHYVDKICYTFDDAAKEFPEKKKLVKTGNPRSQQVLSLNAKPVDLAGDLGLNPKIPTVLVFGGSRGALAINRVMLKSLMELKKKPYQVIWATGTYYYDAIEKKLADVDYDDSIKVVPYIDNMPGLLPEMTCVVSRSGATSLAEFTALGVPVILIPSPNVTHNHQMKNAMDLEKAGAALVIAEDDLNENTFVSSIDHLLLDQSYDEKMRQASKALGVPDASDQVIKVMKEIAKKN.

Residues threonine 10–glycine 12, asparagine 126, serine 200, isoleucine 255, and glutamine 300 each bind UDP-N-acetyl-alpha-D-glucosamine.

Belongs to the glycosyltransferase 28 family. MurG subfamily.

The protein resides in the cell membrane. It catalyses the reaction Mur2Ac(oyl-L-Ala-gamma-D-Glu-L-Lys-D-Ala-D-Ala)-di-trans,octa-cis-undecaprenyl diphosphate + UDP-N-acetyl-alpha-D-glucosamine = beta-D-GlcNAc-(1-&gt;4)-Mur2Ac(oyl-L-Ala-gamma-D-Glu-L-Lys-D-Ala-D-Ala)-di-trans,octa-cis-undecaprenyl diphosphate + UDP + H(+). It participates in cell wall biogenesis; peptidoglycan biosynthesis. Its function is as follows. Cell wall formation. Catalyzes the transfer of a GlcNAc subunit on undecaprenyl-pyrophosphoryl-MurNAc-pentapeptide (lipid intermediate I) to form undecaprenyl-pyrophosphoryl-MurNAc-(pentapeptide)GlcNAc (lipid intermediate II). This is UDP-N-acetylglucosamine--N-acetylmuramyl-(pentapeptide) pyrophosphoryl-undecaprenol N-acetylglucosamine transferase from Lactobacillus delbrueckii subsp. bulgaricus (strain ATCC 11842 / DSM 20081 / BCRC 10696 / JCM 1002 / NBRC 13953 / NCIMB 11778 / NCTC 12712 / WDCM 00102 / Lb 14).